Consider the following 211-residue polypeptide: MNMIRFITIPDFADYQVTLKLMEDYVNKVISDHEPEIIYLVEHSEVYTAGTNYKQEELLNYGDIPVIYTGRGGKFTFHGPGQRVIYPILNLASPNRHKDLKLYIKMLEEWIINSLNYFGIKAYIIKDKVGIWAKVRKDEFAKIAAIGVRVRKWVTYHGVAINISTDLSKFSGIIPCGLENSLITSLNQLGIHVEMSEFDKIIQTEFNKIFK.

One can recognise a BPL/LPL catalytic domain in the interval 32 to 211; that stretch reads DHEPEIIYLV…IQTEFNKIFK (180 aa). Substrate-binding positions include 71-78, 145-147, and 158-160; these read RGGKFTFH, AIG, and GVA. The active-site Acyl-thioester intermediate is the Cys-176.

Belongs to the LipB family.

It is found in the cytoplasm. It catalyses the reaction octanoyl-[ACP] + L-lysyl-[protein] = N(6)-octanoyl-L-lysyl-[protein] + holo-[ACP] + H(+). The protein operates within protein modification; protein lipoylation via endogenous pathway; protein N(6)-(lipoyl)lysine from octanoyl-[acyl-carrier-protein]: step 1/2. Functionally, catalyzes the transfer of endogenously produced octanoic acid from octanoyl-acyl-carrier-protein onto the lipoyl domains of lipoate-dependent enzymes. Lipoyl-ACP can also act as a substrate although octanoyl-ACP is likely to be the physiological substrate. This Rickettsia massiliae (strain Mtu5) protein is Octanoyltransferase.